We begin with the raw amino-acid sequence, 614 residues long: Bifunctional enzyme CysN/CysC (614 aa).

The tract at residues 1-441 is sulfate adenylyltransferase; the sequence is MTTLLRLATA…SLVTAQDRPP (441 aa). One can recognise a tr-type G domain in the interval 2–217; the sequence is TTLLRLATAG…DVYIAGDRNM (216 aa). The segment at 11 to 18 is G1; sequence GSVDDGKS. Residue 11–18 participates in GTP binding; sequence GSVDDGKS. Residues 67–71 are G2; that stretch reads GITID. Positions 88–91 are G3; sequence DTPG. Residues 88–92 and 143–146 contribute to the GTP site; these read DTPGH and NKMD. The segment at 143–146 is G4; the sequence is NKMD. The tract at residues 180–182 is G5; the sequence is SAL. Positions 442-614 are adenylyl-sulfate kinase; that stretch reads RGKTVWFTGL…EVIDLLESSS (173 aa). 450–457 lines the ATP pocket; it reads GLSGSGKS. The Phosphoserine intermediate role is filled by Ser524. Residues 578-597 form a disordered region; that stretch reads GIDSPYQRPKNPDLRLTPDR. A compositionally biased stretch (basic and acidic residues) spans 587 to 597; sequence KNPDLRLTPDR.

In the C-terminal section; belongs to the APS kinase family. This sequence in the N-terminal section; belongs to the TRAFAC class translation factor GTPase superfamily. Classic translation factor GTPase family. CysN/NodQ subfamily. Heterodimer composed of CysD, the smaller subunit, and CysNC.

It catalyses the reaction sulfate + ATP + H(+) = adenosine 5'-phosphosulfate + diphosphate. The enzyme catalyses adenosine 5'-phosphosulfate + ATP = 3'-phosphoadenylyl sulfate + ADP + H(+). It participates in sulfur metabolism; hydrogen sulfide biosynthesis; sulfite from sulfate: step 1/3. It functions in the pathway sulfur metabolism; hydrogen sulfide biosynthesis; sulfite from sulfate: step 2/3. In terms of biological role, with CysD forms the ATP sulfurylase (ATPS) that catalyzes the adenylation of sulfate producing adenosine 5'-phosphosulfate (APS) and diphosphate, the first enzymatic step in sulfur assimilation pathway. APS synthesis involves the formation of a high-energy phosphoric-sulfuric acid anhydride bond driven by GTP hydrolysis by CysN coupled to ATP hydrolysis by CysD. Its function is as follows. APS kinase catalyzes the synthesis of activated sulfate. The polypeptide is Bifunctional enzyme CysN/CysC (cysNC) (Mycobacterium tuberculosis (strain CDC 1551 / Oshkosh)).